The sequence spans 394 residues: Phosphoglycerate kinase (394 aa).

Substrate contacts are provided by residues 21 to 23 (DFN), Arg-36, 59 to 62 (HFGR), Arg-118, and Arg-151. ATP contacts are provided by residues Lys-201, Glu-323, and 349-352 (GGDS).

The protein belongs to the phosphoglycerate kinase family. In terms of assembly, monomer.

It is found in the cytoplasm. The enzyme catalyses (2R)-3-phosphoglycerate + ATP = (2R)-3-phospho-glyceroyl phosphate + ADP. It participates in carbohydrate degradation; glycolysis; pyruvate from D-glyceraldehyde 3-phosphate: step 2/5. The polypeptide is Phosphoglycerate kinase (Brevibacillus brevis (strain 47 / JCM 6285 / NBRC 100599)).